We begin with the raw amino-acid sequence, 334 residues long: Fructose-1,6-bisphosphatase class 1 (334 aa).

Positions 90, 113, 115, and 116 each coordinate Mg(2+). Residues 116-119 (DGSS), Asn-209, Tyr-242, and Lys-272 each bind substrate. Residue Glu-278 coordinates Mg(2+).

It belongs to the FBPase class 1 family. Homotetramer. Requires Mg(2+) as cofactor.

It localises to the cytoplasm. The enzyme catalyses beta-D-fructose 1,6-bisphosphate + H2O = beta-D-fructose 6-phosphate + phosphate. Its pathway is carbohydrate biosynthesis; gluconeogenesis. This Haemophilus ducreyi (strain 35000HP / ATCC 700724) protein is Fructose-1,6-bisphosphatase class 1.